The chain runs to 171 residues: UPF0398 protein SPy_1647/M5005_Spy1353 (171 aa).

The protein belongs to the UPF0398 family.

The chain is UPF0398 protein SPy_1647/M5005_Spy1353 from Streptococcus pyogenes serotype M1.